The sequence spans 367 residues: Alginate lyase (367 aa).

An N-terminal signal peptide occupies residues 1-27 (MKTSHLIRIALPGALAAALLASQVSQA). Substrate-binding positions include 65–66 (SK), 138–139 (HT), and Y256.

The protein belongs to the polysaccharide lyase 5 family.

It localises to the periplasm. The catalysed reaction is Eliminative cleavage of alginate to give oligosaccharides with 4-deoxy-alpha-L-erythro-hex-4-enuronosyl groups at their non-reducing ends and beta-D-mannuronate at their reducing end.. Its function is as follows. Catalyzes the depolymerization of alginate by cleaving the beta-1,4 glycosidic bond between two adjacent sugar residues via a beta-elimination mechanism. May serve to degrade mislocalized alginate that is trapped in the periplasmic space. Acts preferentially on non-acetylated alginate or its precursor mannuronan. Is able to catalyze cleavage adjacent to either mannuronate or guluronate residues in alginate. Exhaustive digestion of alginate by AlgL generates dimeric and trimeric products. In addition to its enzymatic function, AlgL appears to be required for alginate export, maybe as part of a multi-protein alginate-secretion complex. This is Alginate lyase from Pseudomonas aeruginosa (strain ATCC 15692 / DSM 22644 / CIP 104116 / JCM 14847 / LMG 12228 / 1C / PRS 101 / PAO1).